We begin with the raw amino-acid sequence, 363 residues long: MSPKNLTRSVVPAIDLYCRKANFKTLKFLSMILCSKKEWYDNTKAPVRNFLVSRCAVFEQLRNRLVDEGKVNLFGVFLTNDSFSFCKMTVDDKFDTSLVDWQKIPFDYSFATERRQHISLLPPDTLFATEKIISLLGVSPNMANLVSIERQRSDLMDFSCKLQSNILEHLLYAKCQGVQVTSTNEEARLLAAICNPEFIDAFWCELTPIRASLKENPSISVPQEYQIYDPVIRATIKEVVAKRLLRSAFDNDIDPLMRLRLDKGWKFKFPTLSSTTDLDFSLKDCLSLDTRRDAYDMTEVFLATMASSKTLRTYSNLVDIVMKDNGRFDSGILKQFNDYVKQEKLNLQNFQAGSSEFLKGVKI.

Its subcellular location is the mitochondrion. Its function is as follows. Function in mitochondrial RNA splicing in the excision of mitochondrial group I introns aI1 and aI5 beta from COX1 and bI3 from COB transcripts and thus would be involved in obtaining the correct structure of the intron, to allow the RNA catalyzed reactions to occur. This chain is Mitochondrial RNA-splicing protein MRS1 (MRS1), found in Saccharomyces paradoxus (Yeast).